The sequence spans 248 residues: Transcription factor Spi-C (248 aa).

The ETS DNA-binding region spans 111 to 194 (LRLFEYLHES…IRRKLTYQFS (84 aa)).

The protein belongs to the ETS family. As to quaternary structure, binds DNA as a monomer.

Its subcellular location is the nucleus. In terms of biological role, controls the development of red pulp macrophages required for red blood cells recycling and iron homeostasis. Transcription factor that binds to the PU-box, a purine-rich DNA sequence (5'-GAGGA[AT]-3') that can act as a lymphoid-specific enhancer. Regulates VCAM1 gene expression. This is Transcription factor Spi-C (SPIC) from Bos taurus (Bovine).